The sequence spans 483 residues: Glutamyl-tRNA(Gln) amidotransferase subunit A (483 aa).

Residues K77 and S152 each act as charge relay system in the active site. The active-site Acyl-ester intermediate is S176.

The protein belongs to the amidase family. GatA subfamily. In terms of assembly, heterotrimer of A, B and C subunits.

It catalyses the reaction L-glutamyl-tRNA(Gln) + L-glutamine + ATP + H2O = L-glutaminyl-tRNA(Gln) + L-glutamate + ADP + phosphate + H(+). Its function is as follows. Allows the formation of correctly charged Gln-tRNA(Gln) through the transamidation of misacylated Glu-tRNA(Gln) in organisms which lack glutaminyl-tRNA synthetase. The reaction takes place in the presence of glutamine and ATP through an activated gamma-phospho-Glu-tRNA(Gln). This is Glutamyl-tRNA(Gln) amidotransferase subunit A from Listeria welshimeri serovar 6b (strain ATCC 35897 / DSM 20650 / CCUG 15529 / CIP 8149 / NCTC 11857 / SLCC 5334 / V8).